A 149-amino-acid polypeptide reads, in one-letter code: UPF0178 protein VV1_1847 (149 aa).

The protein belongs to the UPF0178 family.

This chain is UPF0178 protein VV1_1847, found in Vibrio vulnificus (strain CMCP6).